We begin with the raw amino-acid sequence, 280 residues long: F-box only protein 27 (280 aa).

A disordered region spans residues 1 to 26; that stretch reads MGAWASRGRAARVPAPEPESEPEEAL. Positions 25-72 constitute an F-box domain; the sequence is ALDLSQLPPELLLVVLSHVPPRTLLGRCRQVCRGWRALVDGQALWLLI. The region spanning 100 to 277 is the FBA domain; it reads PCPLGRFCAR…VTNSSVIVRV (178 aa).

Part of a SCF (SKP1-cullin-F-box) protein ligase complex. Interacts with SKP1 and CUL1.

Its function is as follows. Substrate-recognition component of the SCF (SKP1-CUL1-F-box protein)-type E3 ubiquitin ligase complex. Able to recognize and bind complex-type oligosaccharides. The sequence is that of F-box only protein 27 (FBXO27) from Macaca fascicularis (Crab-eating macaque).